The primary structure comprises 515 residues: Putative BTB/POZ domain-containing protein At3g49970 (515 aa).

The BTB domain maps to 1–63; that stretch reads MLEKLSFLLH…CYDISFEINT (63 aa). The NPH3 domain occupies 149–409; sequence DWWADDLAVL…NSDSPAPATA (261 aa). The residue at position 350 (Tyr350) is a Phosphotyrosine. Residues 395–417 form a disordered region; it reads QENLSNSDSPAPATAEKTLSPPE. Residues 418–452 are a coiled coil; it reads LSSYKNELSKLNRENQYLKLELLKVKMKFKELEKE. The tract at residues 494 to 515 is disordered; it reads INPFGLKQGQTKQPKSRRHSIS.

The protein belongs to the NPH3 family.

The protein operates within protein modification; protein ubiquitination. Functionally, may act as a substrate-specific adapter of an E3 ubiquitin-protein ligase complex (CUL3-RBX1-BTB) which mediates the ubiquitination and subsequent proteasomal degradation of target proteins. The polypeptide is Putative BTB/POZ domain-containing protein At3g49970 (Arabidopsis thaliana (Mouse-ear cress)).